Here is a 312-residue protein sequence, read N- to C-terminus: Aspartate carbamoyltransferase catalytic subunit (312 aa).

Residues Arg58 and Thr59 each contribute to the carbamoyl phosphate site. Residue Lys86 coordinates L-aspartate. Residues Arg108, His136, and Gln139 each contribute to the carbamoyl phosphate site. L-aspartate contacts are provided by Arg169 and Arg223. Residues Gly264 and Pro265 each coordinate carbamoyl phosphate.

This sequence belongs to the aspartate/ornithine carbamoyltransferase superfamily. ATCase family. Heterododecamer (2C3:3R2) of six catalytic PyrB chains organized as two trimers (C3), and six regulatory PyrI chains organized as three dimers (R2).

It catalyses the reaction carbamoyl phosphate + L-aspartate = N-carbamoyl-L-aspartate + phosphate + H(+). The protein operates within pyrimidine metabolism; UMP biosynthesis via de novo pathway; (S)-dihydroorotate from bicarbonate: step 2/3. Catalyzes the condensation of carbamoyl phosphate and aspartate to form carbamoyl aspartate and inorganic phosphate, the committed step in the de novo pyrimidine nucleotide biosynthesis pathway. The chain is Aspartate carbamoyltransferase catalytic subunit from Syntrophomonas wolfei subsp. wolfei (strain DSM 2245B / Goettingen).